A 246-amino-acid polypeptide reads, in one-letter code: Metallo-beta-lactamase type 2 (246 aa).

An N-terminal signal peptide occupies residues 1 to 20 (MKKLFVLCVCFFCSITAAGA). Zn(2+) is bound by residues histidine 95, histidine 97, aspartate 99, histidine 157, and cysteine 176. An a beta-lactam-binding site is contributed by aspartate 99. The a beta-lactam site is built by lysine 179 and asparagine 185. Histidine 215 provides a ligand contact to Zn(2+).

It belongs to the metallo-beta-lactamase superfamily. Class-B beta-lactamase family. In terms of assembly, monomer. Requires Zn(2+) as cofactor.

Its subcellular location is the periplasm. It carries out the reaction a beta-lactam + H2O = a substituted beta-amino acid. In terms of biological role, confers resistance to the different beta-lactam antibiotics (penicillin, cephalosporin and carbapenem) via the hydrolysis of the beta-lactam ring. Exhibits higher catalytic efficiency toward ticarcillin and piperacillin than blaIMP-1. Exhibits catalytic activity for carbapenem compounds, but has a preference for imipenem and ertapenem over meropenem. Has high efficiency for the hydrolysis of cefuroxime. Exhibits hydrolysis of all cephalosporins tested. Exhibits no hydrolysis of temocillin, the 6-alpha-methoxy semisynthetic derivative of ticarcillin. The protein is Metallo-beta-lactamase type 2 of Pseudomonas aeruginosa.